The sequence spans 366 residues: Phospho-N-acetylmuramoyl-pentapeptide-transferase (366 aa).

Helical transmembrane passes span 27–47 (AALF…IASL), 71–91 (TPTM…LLWA), 93–113 (LSSI…AIGF), 138–158 (FVIA…AGAA), 174–194 (LMLN…VGAG), 205–225 (GLAI…AYLA), 245–265 (LAVI…FNAP), 268–288 (AIFM…TVAV), 297–317 (IIIG…VFWF), and 343–363 (QVVI…LSTL).

Belongs to the glycosyltransferase 4 family. MraY subfamily. Mg(2+) is required as a cofactor.

The protein resides in the cell inner membrane. The catalysed reaction is UDP-N-acetyl-alpha-D-muramoyl-L-alanyl-gamma-D-glutamyl-meso-2,6-diaminopimeloyl-D-alanyl-D-alanine + di-trans,octa-cis-undecaprenyl phosphate = di-trans,octa-cis-undecaprenyl diphospho-N-acetyl-alpha-D-muramoyl-L-alanyl-D-glutamyl-meso-2,6-diaminopimeloyl-D-alanyl-D-alanine + UMP. It participates in cell wall biogenesis; peptidoglycan biosynthesis. Catalyzes the initial step of the lipid cycle reactions in the biosynthesis of the cell wall peptidoglycan: transfers peptidoglycan precursor phospho-MurNAc-pentapeptide from UDP-MurNAc-pentapeptide onto the lipid carrier undecaprenyl phosphate, yielding undecaprenyl-pyrophosphoryl-MurNAc-pentapeptide, known as lipid I. This Rhizobium meliloti (strain 1021) (Ensifer meliloti) protein is Phospho-N-acetylmuramoyl-pentapeptide-transferase.